Consider the following 357-residue polypeptide: DNA replication and repair protein RecF (357 aa).

Gly-31 to Thr-38 provides a ligand contact to ATP.

Belongs to the RecF family.

Its subcellular location is the cytoplasm. Its function is as follows. The RecF protein is involved in DNA metabolism; it is required for DNA replication and normal SOS inducibility. RecF binds preferentially to single-stranded, linear DNA. It also seems to bind ATP. The protein is DNA replication and repair protein RecF of Coxiella burnetii (strain CbuG_Q212) (Coxiella burnetii (strain Q212)).